A 300-amino-acid chain; its full sequence is Iron-dependent extradiol dioxygenase (300 aa).

VOC domains follow at residues 5–120 (SLGY…VFHG) and 142–270 (GMGH…FGCE). His-145 provides a ligand contact to Fe cation. Substrate-binding residues include His-200, His-215, Asp-250, and Tyr-256. A Fe cation-binding site is contributed by His-215. Glu-266 lines the Fe cation pocket.

This sequence belongs to the extradiol ring-cleavage dioxygenase family. In terms of assembly, homodimer, but may form a homooctamer. It depends on Fe(2+) as a cofactor.

It catalyses the reaction 3,4-dihydroxy-9,10-secoandrosta-1,3,5(10)-triene-9,17-dione + O2 = (1E,2Z)-3-hydroxy-5,9,17-trioxo-4,5:9,10-disecoandrosta-1(10),2-dien-4-oate + H(+). It functions in the pathway steroid metabolism; cholesterol metabolism. In terms of biological role, catalyzes the meta-cleavage of 3,4-dihydroxy-9,10-seconandrost-1,3,5(10)-triene-9,17-dione (3,4-DHSA) to produce 4,5-9,10-diseco-3-hydroxy-5,9,17-trioxoandrosta-1(10),2-diene-4-oic acid (4,9-DSHA). This is Iron-dependent extradiol dioxygenase (hsaC) from Mycobacterium tuberculosis (strain CDC 1551 / Oshkosh).